The primary structure comprises 171 residues: Galectin-related protein (171 aa).

In terms of domain architecture, Galectin spans 38–170 (PFCGHIKGGM…INGDLQLTKL (133 aa)).

Functionally, does not bind lactose, and may not bind carbohydrates. The protein is Galectin-related protein (lgalsl) of Xenopus tropicalis (Western clawed frog).